Consider the following 359-residue polypeptide: Fructose-bisphosphate aldolase class 2 (359 aa).

Ser61 contacts D-glyceraldehyde 3-phosphate. Asp110 (proton donor) is an active-site residue. Residues His111, Asp145, Glu175, and His227 each contribute to the Zn(2+) site. Gly228 is a binding site for dihydroxyacetone phosphate. Residue His265 participates in Zn(2+) binding. Dihydroxyacetone phosphate contacts are provided by residues 266–268 and 287–290; these read GGS and NIDT.

The protein belongs to the class II fructose-bisphosphate aldolase family. It depends on Zn(2+) as a cofactor.

It catalyses the reaction beta-D-fructose 1,6-bisphosphate = D-glyceraldehyde 3-phosphate + dihydroxyacetone phosphate. It functions in the pathway carbohydrate degradation; glycolysis; D-glyceraldehyde 3-phosphate and glycerone phosphate from D-glucose: step 4/4. Catalyzes the aldol condensation of dihydroxyacetone phosphate (DHAP or glycerone-phosphate) with glyceraldehyde 3-phosphate (G3P) to form fructose 1,6-bisphosphate (FBP) in gluconeogenesis and the reverse reaction in glycolysis. This is Fructose-bisphosphate aldolase class 2 (fbaA) from Buchnera aphidicola subsp. Schizaphis graminum (strain Sg).